A 347-amino-acid chain; its full sequence is Histidinol-phosphate aminotransferase (347 aa).

N6-(pyridoxal phosphate)lysine is present on Lys-209.

This sequence belongs to the class-II pyridoxal-phosphate-dependent aminotransferase family. Histidinol-phosphate aminotransferase subfamily. Homodimer. Requires pyridoxal 5'-phosphate as cofactor.

The enzyme catalyses L-histidinol phosphate + 2-oxoglutarate = 3-(imidazol-4-yl)-2-oxopropyl phosphate + L-glutamate. It participates in amino-acid biosynthesis; L-histidine biosynthesis; L-histidine from 5-phospho-alpha-D-ribose 1-diphosphate: step 7/9. The sequence is that of Histidinol-phosphate aminotransferase from Syntrophotalea carbinolica (strain DSM 2380 / NBRC 103641 / GraBd1) (Pelobacter carbinolicus).